Reading from the N-terminus, the 275-residue chain is Penicillin-insensitive murein endopeptidase (275 aa).

Residues 1–19 (MKNWIVGMVALVTMVPVMA) form the signal peptide. Intrachain disulfides connect Cys-44-Cys-264, Cys-187-Cys-235, and Cys-216-Cys-223. Positions 110, 113, 120, 147, and 211 each coordinate Zn(2+). The tract at residues 227–262 (DTPPPGDGCGAELESWFQPPPPSAKPGKTLPPPLPP) is disordered. Pro residues predominate over residues 244–262 (QPPPPSAKPGKTLPPPLPP).

This sequence belongs to the peptidase M74 family. Dimer. Requires Zn(2+) as cofactor.

It is found in the periplasm. Functionally, murein endopeptidase that cleaves the D-alanyl-meso-2,6-diamino-pimelyl amide bond that connects peptidoglycan strands. Likely plays a role in the removal of murein from the sacculus. This is Penicillin-insensitive murein endopeptidase from Yersinia pestis bv. Antiqua (strain Antiqua).